A 122-amino-acid chain; its full sequence is Large ribosomal subunit protein uL14 (122 aa).

It belongs to the universal ribosomal protein uL14 family. As to quaternary structure, part of the 50S ribosomal subunit. Forms a cluster with proteins L3 and L19. In the 70S ribosome, L14 and L19 interact and together make contacts with the 16S rRNA in bridges B5 and B8.

Its function is as follows. Binds to 23S rRNA. Forms part of two intersubunit bridges in the 70S ribosome. This is Large ribosomal subunit protein uL14 from Gluconobacter oxydans (strain 621H) (Gluconobacter suboxydans).